Consider the following 367-residue polypeptide: Glutamate 5-kinase (367 aa).

Lys9 is a binding site for ATP. Substrate contacts are provided by Ser49, Asp136, and Asn148. Residues 168–169 (TD) and 210–216 (TGGMKSK) each bind ATP. Residues 276–350 (SGQIEVDAGA…GMQSQDIQAR (75 aa)) enclose the PUA domain.

This sequence belongs to the glutamate 5-kinase family.

Its subcellular location is the cytoplasm. It catalyses the reaction L-glutamate + ATP = L-glutamyl 5-phosphate + ADP. It functions in the pathway amino-acid biosynthesis; L-proline biosynthesis; L-glutamate 5-semialdehyde from L-glutamate: step 1/2. In terms of biological role, catalyzes the transfer of a phosphate group to glutamate to form L-glutamate 5-phosphate. The sequence is that of Glutamate 5-kinase from Bacillus mycoides (strain KBAB4) (Bacillus weihenstephanensis).